We begin with the raw amino-acid sequence, 394 residues long: Probable purine permease 23 (394 aa).

Basic and acidic residues predominate over residues 1–20 (MEMTEASKHTTTHEESEHVQ). The segment at 1–24 (MEMTEASKHTTTHEESEHVQNPEP) is disordered. Ser29 is modified (phosphoserine). The next 10 membrane-spanning stretches (helical) occupy residues 43-63 (ISVLICLFLVLLGDSLVILLL), 85-105 (WMQALIQNAAFPILIPLFFIF), 124-144 (LILLYFSLGVLVAAHSKLYAL), 152-172 (GFFMLISGSQLIFTLIFTAII), 180-200 (WIIISIVLILVSYAFGGPVFS), 211-231 (GIQAWLTFAASVAFALSLCLV), 254-274 (VLEMQICVSSVASVVCLVGLF), 301-321 (VGLALSWQVWAVGLIGLVLYV), 328-348 (IVHMCASPLMAFIVVLAFDFI), and 352-372 (FSWPRIGALIGSVLALGSYFY).

Belongs to the purine permeases (TC 2.A.7.14) family.

It is found in the membrane. The polypeptide is Probable purine permease 23 (PUP23) (Arabidopsis thaliana (Mouse-ear cress)).